A 369-amino-acid polypeptide reads, in one-letter code: S-adenosyl-L-methionine-dependent uroporphyrinogen III methyltransferase, chloroplastic (369 aa).

A chloroplast-targeting transit peptide spans 1–28 (MALVQRIPISSSSIRNWQQARTNLTPIC). Residues P124, 200–202 (GGD), 230–231 (TA), M284, and T341 contribute to the S-adenosyl-L-homocysteine site.

Belongs to the precorrin methyltransferase family. Mostly expressed in leaves, and, to a lower extent, in stems, flowers and siliques.

The protein localises to the plastid. Its subcellular location is the chloroplast. The catalysed reaction is uroporphyrinogen III + 2 S-adenosyl-L-methionine = precorrin-2 + 2 S-adenosyl-L-homocysteine + H(+). Its pathway is porphyrin-containing compound metabolism; siroheme biosynthesis; precorrin-2 from uroporphyrinogen III: step 1/1. Essential protein required for siroheme biosynthesis. Catalyzes the two successive C-2 and C-7 methylation reactions involved in the conversion of uroporphyrinogen III to precorrin-2 via the intermediate formation of precorrin-1. It is a step in the biosynthesis of siroheme. Promotes nitrogen and sulfur assimilation as well as photosynthesis efficiency by triggering chlorophyll, nitrite reductase (NiR) and sulfite reductase (SiR) biosynthesis. In Arabidopsis thaliana (Mouse-ear cress), this protein is S-adenosyl-L-methionine-dependent uroporphyrinogen III methyltransferase, chloroplastic.